Reading from the N-terminus, the 79-residue chain is UPF0180 protein BCE_1513 (79 aa).

This sequence belongs to the UPF0180 family.

This is UPF0180 protein BCE_1513 from Bacillus cereus (strain ATCC 10987 / NRS 248).